The sequence spans 379 residues: Homoserine O-succinyltransferase (379 aa).

In terms of domain architecture, AB hydrolase-1 spans 51-360 (NAVLICHALS…DSPYGHDAFL (310 aa)). Ser157 (nucleophile) is an active-site residue. Arg227 serves as a coordination point for substrate. Catalysis depends on residues Asp323 and His356. Position 357 (Asp357) interacts with substrate.

The protein belongs to the AB hydrolase superfamily. MetX family. In terms of assembly, homodimer.

It is found in the cytoplasm. The catalysed reaction is L-homoserine + succinyl-CoA = O-succinyl-L-homoserine + CoA. It functions in the pathway amino-acid biosynthesis; L-methionine biosynthesis via de novo pathway; O-succinyl-L-homoserine from L-homoserine: step 1/1. Its function is as follows. Transfers a succinyl group from succinyl-CoA to L-homoserine, forming succinyl-L-homoserine. The protein is Homoserine O-succinyltransferase of Pseudomonas putida (strain W619).